A 418-amino-acid polypeptide reads, in one-letter code: UDP-N-acetylglucosamine 1-carboxyvinyltransferase (418 aa).

Phosphoenolpyruvate is bound at residue 22–23 (KN). Residue R92 participates in UDP-N-acetyl-alpha-D-glucosamine binding. C116 functions as the Proton donor in the catalytic mechanism. C116 is subject to 2-(S-cysteinyl)pyruvic acid O-phosphothioketal. UDP-N-acetyl-alpha-D-glucosamine contacts are provided by residues 121–125 (RPIDL), D305, and L327.

It belongs to the EPSP synthase family. MurA subfamily.

It localises to the cytoplasm. It catalyses the reaction phosphoenolpyruvate + UDP-N-acetyl-alpha-D-glucosamine = UDP-N-acetyl-3-O-(1-carboxyvinyl)-alpha-D-glucosamine + phosphate. The protein operates within cell wall biogenesis; peptidoglycan biosynthesis. Cell wall formation. Adds enolpyruvyl to UDP-N-acetylglucosamine. The polypeptide is UDP-N-acetylglucosamine 1-carboxyvinyltransferase (Campylobacter lari (strain RM2100 / D67 / ATCC BAA-1060)).